The sequence spans 252 residues: Small ribosomal subunit protein uS3 (252 aa).

A KH type-2 domain is found at 16–85; it reads IDEYLETKLE…NPQVEVKEVD (70 aa). A disordered region spans residues 233 to 252; sequence EESEIEEITEEIEDVETLEE.

It belongs to the universal ribosomal protein uS3 family. As to quaternary structure, part of the 30S ribosomal subunit.

In terms of biological role, binds the lower part of the 30S subunit head. The protein is Small ribosomal subunit protein uS3 of Methanosphaera stadtmanae (strain ATCC 43021 / DSM 3091 / JCM 11832 / MCB-3).